A 516-amino-acid chain; its full sequence is 3-phosphoshikimate 1-carboxyvinyltransferase, chloroplastic (516 aa).

Residues 1 to 72 constitute a chloroplast transit peptide; the sequence is MAQINNMAQG…RISASVATAQ (72 aa). 3 residues coordinate 3-phosphoshikimate: lysine 95, serine 96, and arginine 100. Phosphoenolpyruvate is bound at residue lysine 95. Residues glycine 173 and arginine 203 each contribute to the phosphoenolpyruvate site. Residues serine 250, serine 251, glutamine 252, serine 278, aspartate 403, and lysine 430 each coordinate 3-phosphoshikimate. Glutamine 252 contacts phosphoenolpyruvate. The active-site Proton acceptor is the aspartate 403. Arginine 434, arginine 476, and lysine 501 together coordinate phosphoenolpyruvate.

It belongs to the EPSP synthase family. In terms of tissue distribution, mostly expressed in flower petals, and, to a lower extent, in roots, stems and anthers, but barely in leaves.

It localises to the plastid. The protein resides in the chloroplast. It catalyses the reaction 3-phosphoshikimate + phosphoenolpyruvate = 5-O-(1-carboxyvinyl)-3-phosphoshikimate + phosphate. The protein operates within metabolic intermediate biosynthesis; chorismate biosynthesis; chorismate from D-erythrose 4-phosphate and phosphoenolpyruvate: step 6/7. Competitively inhibited by glyphosate. Catalyzes the transfer of the enolpyruvyl moiety of phosphoenolpyruvate (PEP) to the 5-hydroxyl of shikimate-3-phosphate (S3P) to produce enolpyruvyl shikimate-3-phosphate and inorganic phosphate. Involved in the accumulation of volatile benzoides in flowers, scent attracting pollinators (e.g. the night-active hawkmoth pollinator Manduca sexta). This is 3-phosphoshikimate 1-carboxyvinyltransferase, chloroplastic from Petunia hybrida (Petunia).